Here is a 277-residue protein sequence, read N- to C-terminus: Collectin-10 (277 aa).

The N-terminal stretch at 1–27 (MNGFASLLRRNQFILLVLFLLQIQSLG) is a signal peptide. Residues 40-107 (ATHTISPGPK…GDKGEKGLLG (68 aa)) are disordered. Over residues 49–64 (KGDDGEKGDPGEEGKH) the composition is skewed to basic and acidic residues. Positions 53–112 (GEKGDPGEEGKHGKVGRMGPKGIKGELGDMGDQGNIGKTGPIGKKGDKGEKGLLGIPGEK) constitute a Collagen-like domain. The C-type lectin domain maps to 155–271 (TEEKFYYIVQ…CHLTMYFVCE (117 aa)). Cystine bridges form between Cys-176-Cys-270 and Cys-248-Cys-262. N-linked (GlcNAc...) asparagine glycosylation occurs at Asn-258.

This sequence belongs to the COLEC10/COLEC11 family. As to expression, highly expressed in liver, placenta and adrenal gland. Moderately expressed in small intestine, lung, stomach and prostate. Weakly expressed in trachea and spleen.

It localises to the secreted. The protein localises to the golgi apparatus. The protein resides in the cytoplasm. Its function is as follows. Lectin that binds to various sugars: galactose &gt; mannose = fucose &gt; N-acetylglucosamine &gt; N-acetylgalactosamine. Acts as a chemoattractant, probably involved in the regulation of cell migration. The chain is Collectin-10 (COLEC10) from Homo sapiens (Human).